The primary structure comprises 440 residues: RUN domain-containing protein 3A (440 aa).

The 133-residue stretch at 52 to 184 (DDSSEEFVNF…IDFSFCLKGE (133 aa)) folds into the RUN domain. Residues 213–233 (DDRESVGGSSSEDSSPEHPYL) are disordered. Positions 262-317 (YLEELVRLRETQLKNLEAENKRLTQRISEQAEQSLQEKHQLEGVILELQEQLTGLL) form a coiled coil. The segment at 374–402 (LSSESQRLDGKQDGEPWGPIGKDPTPSML) is disordered.

The protein belongs to the RUNDC3 family.

The polypeptide is RUN domain-containing protein 3A (rundc3a) (Xenopus tropicalis (Western clawed frog)).